The following is a 160-amino-acid chain: SsrA-binding protein (160 aa).

Residues 134–160 (RKAHDKREAVKERDWNRDKARLMRDRG) are disordered. Over residues 138–160 (DKREAVKERDWNRDKARLMRDRG) the composition is skewed to basic and acidic residues.

It belongs to the SmpB family.

The protein localises to the cytoplasm. Required for rescue of stalled ribosomes mediated by trans-translation. Binds to transfer-messenger RNA (tmRNA), required for stable association of tmRNA with ribosomes. tmRNA and SmpB together mimic tRNA shape, replacing the anticodon stem-loop with SmpB. tmRNA is encoded by the ssrA gene; the 2 termini fold to resemble tRNA(Ala) and it encodes a 'tag peptide', a short internal open reading frame. During trans-translation Ala-aminoacylated tmRNA acts like a tRNA, entering the A-site of stalled ribosomes, displacing the stalled mRNA. The ribosome then switches to translate the ORF on the tmRNA; the nascent peptide is terminated with the 'tag peptide' encoded by the tmRNA and targeted for degradation. The ribosome is freed to recommence translation, which seems to be the essential function of trans-translation. In Azorhizobium caulinodans (strain ATCC 43989 / DSM 5975 / JCM 20966 / LMG 6465 / NBRC 14845 / NCIMB 13405 / ORS 571), this protein is SsrA-binding protein.